We begin with the raw amino-acid sequence, 211 residues long: Protein-L-isoaspartate O-methyltransferase (211 aa).

The active site involves Ser-62.

Belongs to the methyltransferase superfamily. L-isoaspartyl/D-aspartyl protein methyltransferase family.

The protein localises to the cytoplasm. It catalyses the reaction [protein]-L-isoaspartate + S-adenosyl-L-methionine = [protein]-L-isoaspartate alpha-methyl ester + S-adenosyl-L-homocysteine. Functionally, catalyzes the methyl esterification of L-isoaspartyl residues in peptides and proteins that result from spontaneous decomposition of normal L-aspartyl and L-asparaginyl residues. It plays a role in the repair and/or degradation of damaged proteins. This is Protein-L-isoaspartate O-methyltransferase from Shewanella woodyi (strain ATCC 51908 / MS32).